Consider the following 107-residue polypeptide: Replication initiation control protein YabA (107 aa).

Positions 81, 83, 97, and 100 each coordinate Zn(2+).

Belongs to the YabA family. In terms of assembly, homotetramer. Interacts with both DnaA and DnaN, acting as a bridge between these two proteins. It depends on Zn(2+) as a cofactor.

It localises to the cytoplasm. It is found in the nucleoid. Its function is as follows. Involved in control of chromosome replication initiation. Inhibits the cooperative binding of DnaA to the oriC region, thus negatively regulating initiation of chromosome replication. Inhibits the ability of DnaA-ATP to form a helix on DNA; does not disassemble preformed DnaA-DNA helices. Decreases the residence time of DnaA on the chromosome at its binding sites (oriC, replication forks and promoter-binding sites). Tethers DnaA to the replication machinery via the DNA polymerase beta sliding clamp subunit (dnaN). Associates with oriC and other DnaA targets on the chromosome in a DnaA-dependent manner. In Streptococcus equi subsp. zooepidemicus (strain MGCS10565), this protein is Replication initiation control protein YabA.